The primary structure comprises 286 residues: Energy-coupling factor transporter ATP-binding protein EcfA2 (286 aa).

The ABC transporter domain occupies 3–246 (IRFDNVSYTY…KEKLADWHIA (244 aa)). 40 to 47 (GQTGSGKS) is a binding site for ATP.

Belongs to the ABC transporter superfamily. Energy-coupling factor EcfA family. Forms a stable energy-coupling factor (ECF) transporter complex composed of 2 membrane-embedded substrate-binding proteins (S component), 2 ATP-binding proteins (A component) and 2 transmembrane proteins (T component).

The protein localises to the cell membrane. Its function is as follows. ATP-binding (A) component of a common energy-coupling factor (ECF) ABC-transporter complex. Unlike classic ABC transporters this ECF transporter provides the energy necessary to transport a number of different substrates. The polypeptide is Energy-coupling factor transporter ATP-binding protein EcfA2 (Staphylococcus aureus (strain bovine RF122 / ET3-1)).